We begin with the raw amino-acid sequence, 499 residues long: D-alanine--D-alanyl carrier protein ligase (499 aa).

152-153 (TS) serves as a coordination point for ATP. Asp197 provides a ligand contact to D-alanine. Residues 292 to 297 (NTYGPT), Asp372, 384 to 387 (YQGR), and Lys485 each bind ATP. Lys485 contacts D-alanine.

Belongs to the ATP-dependent AMP-binding enzyme family. DltA subfamily.

It is found in the cytoplasm. It carries out the reaction holo-[D-alanyl-carrier protein] + D-alanine + ATP = D-alanyl-[D-alanyl-carrier protein] + AMP + diphosphate. Its pathway is cell wall biogenesis; lipoteichoic acid biosynthesis. Catalyzes the first step in the D-alanylation of lipoteichoic acid (LTA), the activation of D-alanine and its transfer onto the D-alanyl carrier protein (Dcp) DltC. In an ATP-dependent two-step reaction, forms a high energy D-alanyl-AMP intermediate, followed by transfer of the D-alanyl residue as a thiol ester to the phosphopantheinyl prosthetic group of the Dcp. D-alanylation of LTA plays an important role in modulating the properties of the cell wall in Gram-positive bacteria, influencing the net charge of the cell wall. This Lactococcus lactis subsp. lactis (strain IL1403) (Streptococcus lactis) protein is D-alanine--D-alanyl carrier protein ligase.